A 443-amino-acid polypeptide reads, in one-letter code: Glutamate--tRNA ligase 2 (443 aa).

The 'HIGH' region motif lies at 7–17; it reads PSPTGLIHVGN. A 'KMSKS' region motif is present at residues 240-244; that stretch reads KLSKR. Position 243 (K243) interacts with ATP.

It belongs to the class-I aminoacyl-tRNA synthetase family. Glutamate--tRNA ligase type 1 subfamily. Monomer.

It is found in the cytoplasm. It carries out the reaction tRNA(Glu) + L-glutamate + ATP = L-glutamyl-tRNA(Glu) + AMP + diphosphate. Catalyzes the attachment of glutamate to tRNA(Glu) in a two-step reaction: glutamate is first activated by ATP to form Glu-AMP and then transferred to the acceptor end of tRNA(Glu). This Gluconacetobacter diazotrophicus (strain ATCC 49037 / DSM 5601 / CCUG 37298 / CIP 103539 / LMG 7603 / PAl5) protein is Glutamate--tRNA ligase 2.